A 230-amino-acid polypeptide reads, in one-letter code: uncharacterized protein (230 aa).

7 consecutive transmembrane segments (helical) span residues 34 to 54, 56 to 76, 87 to 107, 111 to 131, 146 to 166, 167 to 187, and 205 to 225; these read FFAG…MNFQ, VVQY…GLMF, MLFA…GMVI, GLGA…LMSV, MLFI…FLGS, PMFQ…YIAY, and VSLY…IGIF.

The protein belongs to the BI1 family.

It is found in the cell membrane. This is an uncharacterized protein from Helicobacter pylori (strain J99 / ATCC 700824) (Campylobacter pylori J99).